The chain runs to 642 residues: uncharacterized protein (642 aa).

2 residues coordinate Mg(2+): Glu15 and Asp118. Positions 29 to 149 (VCVDTCVVID…YNLAKAQGIE (121 aa)) constitute a PINc domain. Residues 510-578 (DNSIDLIVPE…ELESTRIYET (69 aa)) form the KH domain.

This sequence in the N-terminal section; belongs to the PINc/VapC protein family. It depends on Mg(2+) as a cofactor.

This is an uncharacterized protein from Methanocaldococcus jannaschii (strain ATCC 43067 / DSM 2661 / JAL-1 / JCM 10045 / NBRC 100440) (Methanococcus jannaschii).